Reading from the N-terminus, the 202-residue chain is D-alanyl-D-alanine dipeptidase (202 aa).

Zn(2+) contacts are provided by H116 and D123. E181 functions as the Proton donor/acceptor in the catalytic mechanism. H184 lines the Zn(2+) pocket.

It belongs to the peptidase M15D family. In terms of assembly, homodimer. It depends on Zn(2+) as a cofactor. Fe(2+) is required as a cofactor. Requires Co(2+) as cofactor. The cofactor is Ni(2+).

It catalyses the reaction D-alanyl-D-alanine + H2O = 2 D-alanine. Inhibited by aminoalkyl phosphinate analogs. Catalyzes hydrolysis of the D-alanyl-D-alanine dipeptide. The chain is D-alanyl-D-alanine dipeptidase (vanX) from Enterococcus faecium (Streptococcus faecium).